The primary structure comprises 254 residues: Hydroxyacylglutathione hydrolase (254 aa).

H54, H56, D58, H59, H111, D130, and H168 together coordinate Zn(2+).

It belongs to the metallo-beta-lactamase superfamily. Glyoxalase II family. In terms of assembly, monomer. Requires Zn(2+) as cofactor.

It carries out the reaction an S-(2-hydroxyacyl)glutathione + H2O = a 2-hydroxy carboxylate + glutathione + H(+). Its pathway is secondary metabolite metabolism; methylglyoxal degradation; (R)-lactate from methylglyoxal: step 2/2. Functionally, thiolesterase that catalyzes the hydrolysis of S-D-lactoyl-glutathione to form glutathione and D-lactic acid. The protein is Hydroxyacylglutathione hydrolase of Legionella pneumophila (strain Paris).